A 103-amino-acid chain; its full sequence is Nucleoid-associated protein BH0035 (103 aa).

The span at 1–20 (MKNMGQMMKQMQKMQKQMMK) shows a compositional bias: low complexity. A disordered region spans residues 1 to 29 (MKNMGQMMKQMQKMQKQMMKAQEELKEKT).

The protein belongs to the YbaB/EbfC family. Homodimer.

It localises to the cytoplasm. Its subcellular location is the nucleoid. Its function is as follows. Binds to DNA and alters its conformation. May be involved in regulation of gene expression, nucleoid organization and DNA protection. This Halalkalibacterium halodurans (strain ATCC BAA-125 / DSM 18197 / FERM 7344 / JCM 9153 / C-125) (Bacillus halodurans) protein is Nucleoid-associated protein BH0035.